We begin with the raw amino-acid sequence, 121 residues long: UPF0102 protein VP0448 (121 aa).

The protein belongs to the UPF0102 family.

The chain is UPF0102 protein VP0448 from Vibrio parahaemolyticus serotype O3:K6 (strain RIMD 2210633).